We begin with the raw amino-acid sequence, 29 residues long: Galanin (29 aa).

Thr-29 bears the Threonine amide mark.

The protein belongs to the galanin family.

Its subcellular location is the secreted. In terms of biological role, contracts smooth muscle of the gastrointestinal and genitourinary tract, regulates growth hormone release, modulates insulin release, and may be involved in the control of adrenal secretion. This is Galanin (GAL) from Gallus gallus (Chicken).